A 341-amino-acid chain; its full sequence is Biotin synthase (341 aa).

Residues 56 to 285 (ADIQRAALLS…KARVRLSAGR (230 aa)) enclose the Radical SAM core domain. Positions 71, 75, and 78 each coordinate [4Fe-4S] cluster. Positions 116, 148, 208, and 280 each coordinate [2Fe-2S] cluster.

It belongs to the radical SAM superfamily. Biotin synthase family. As to quaternary structure, homodimer. It depends on [4Fe-4S] cluster as a cofactor. Requires [2Fe-2S] cluster as cofactor.

The enzyme catalyses (4R,5S)-dethiobiotin + (sulfur carrier)-SH + 2 reduced [2Fe-2S]-[ferredoxin] + 2 S-adenosyl-L-methionine = (sulfur carrier)-H + biotin + 2 5'-deoxyadenosine + 2 L-methionine + 2 oxidized [2Fe-2S]-[ferredoxin]. The protein operates within cofactor biosynthesis; biotin biosynthesis; biotin from 7,8-diaminononanoate: step 2/2. Its function is as follows. Catalyzes the conversion of dethiobiotin (DTB) to biotin by the insertion of a sulfur atom into dethiobiotin via a radical-based mechanism. The chain is Biotin synthase from Methylorubrum populi (strain ATCC BAA-705 / NCIMB 13946 / BJ001) (Methylobacterium populi).